We begin with the raw amino-acid sequence, 353 residues long: S-adenosylmethionine:tRNA ribosyltransferase-isomerase (353 aa).

It belongs to the QueA family. Monomer.

The protein localises to the cytoplasm. It carries out the reaction 7-aminomethyl-7-carbaguanosine(34) in tRNA + S-adenosyl-L-methionine = epoxyqueuosine(34) in tRNA + adenine + L-methionine + 2 H(+). The protein operates within tRNA modification; tRNA-queuosine biosynthesis. Its function is as follows. Transfers and isomerizes the ribose moiety from AdoMet to the 7-aminomethyl group of 7-deazaguanine (preQ1-tRNA) to give epoxyqueuosine (oQ-tRNA). The polypeptide is S-adenosylmethionine:tRNA ribosyltransferase-isomerase (Nitrosomonas europaea (strain ATCC 19718 / CIP 103999 / KCTC 2705 / NBRC 14298)).